We begin with the raw amino-acid sequence, 387 residues long: Carbamoyl phosphate synthase small chain (387 aa).

A CPSase region spans residues 1–189 (MIKSAILVLE…GLPEDKQEQD (189 aa)). 3 residues coordinate L-glutamine: Ser-47, Gly-241, and Gly-243. A Glutamine amidotransferase type-1 domain is found at 193-380 (HVVAYDFGAK…IELIEQYCQK (188 aa)). Cys-269 (nucleophile) is an active-site residue. 5 residues coordinate L-glutamine: Leu-270, Gln-273, Asn-311, Gly-313, and Phe-314. Catalysis depends on residues His-353 and Glu-355.

This sequence belongs to the CarA family. In terms of assembly, composed of two chains; the small (or glutamine) chain promotes the hydrolysis of glutamine to ammonia, which is used by the large (or ammonia) chain to synthesize carbamoyl phosphate. Tetramer of heterodimers (alpha,beta)4.

It carries out the reaction hydrogencarbonate + L-glutamine + 2 ATP + H2O = carbamoyl phosphate + L-glutamate + 2 ADP + phosphate + 2 H(+). It catalyses the reaction L-glutamine + H2O = L-glutamate + NH4(+). The protein operates within amino-acid biosynthesis; L-arginine biosynthesis; carbamoyl phosphate from bicarbonate: step 1/1. It participates in pyrimidine metabolism; UMP biosynthesis via de novo pathway; (S)-dihydroorotate from bicarbonate: step 1/3. Functionally, small subunit of the glutamine-dependent carbamoyl phosphate synthetase (CPSase). CPSase catalyzes the formation of carbamoyl phosphate from the ammonia moiety of glutamine, carbonate, and phosphate donated by ATP, constituting the first step of 2 biosynthetic pathways, one leading to arginine and/or urea and the other to pyrimidine nucleotides. The small subunit (glutamine amidotransferase) binds and cleaves glutamine to supply the large subunit with the substrate ammonia. This Photorhabdus laumondii subsp. laumondii (strain DSM 15139 / CIP 105565 / TT01) (Photorhabdus luminescens subsp. laumondii) protein is Carbamoyl phosphate synthase small chain.